We begin with the raw amino-acid sequence, 355 residues long: MQKKVLFNDIVFVCFPITDNGSIIISDIGYSDDGYNRPTGRQGTIENGDPYRITVPAGYSYTNKNVQNGNMIRLVRVNDSKNGCWYNGSGDGWLEIRDYVGPDWRADWTVQIINPANNDNSLYYGQHFRLMNRAQVENPTFQGPSDFASIALWGSNNTNNSVMMLLNGPLDTAKLECCKDNPIFTQPDYCANYRGTTCSGQCDDILSNYCAQVTTTDPKCGCLLPASFYTQNSAIGPPECIDDRCVDTNSYRKSTQCHPNCQIVDCDININDFNGTNINKIVYEQECGSKSTPNGPNGPTPTPSNGPNGPTPVPGIPPANGSSTSFFSRYGLWIIIAIILLIVIISAVGIYFYLR.

Positions 1-21 are cleaved as a signal peptide; it reads MQKKVLFNDIVFVCFPITDNG. Residues Asn20, Asn78, Asn87, Asn156, Asn159, and Asn274 are each glycosylated (N-linked (GlcNAc...) asparagine; by host). The Virion surface portion of the chain corresponds to 22–331; the sequence is SIIISDIGYS…SSTSFFSRYG (310 aa). Residues 288 to 317 form a disordered region; that stretch reads GSKSTPNGPNGPTPTPSNGPNGPTPVPGIP. Pro residues predominate over residues 296–317; the sequence is PNGPTPTPSNGPNGPTPVPGIP. Asn320 is a glycosylation site (N-linked (GlcNAc...) asparagine; by host). A helical transmembrane segment spans residues 332–352; it reads LWIIIAIILLIVIISAVGIYF. The Intravirion portion of the chain corresponds to 353 to 355; that stretch reads YLR.

Its subcellular location is the host membrane. The protein resides in the virion. This is an uncharacterized protein from Acanthamoeba polyphaga mimivirus (APMV).